We begin with the raw amino-acid sequence, 337 residues long: Alanine racemase (337 aa).

The active-site Proton acceptor; specific for D-alanine is the Lys-33. Lys-33 is subject to N6-(pyridoxal phosphate)lysine. Substrate is bound at residue Arg-118. The active-site Proton acceptor; specific for L-alanine is Tyr-246. Met-292 contributes to the substrate binding site.

This sequence belongs to the alanine racemase family. Pyridoxal 5'-phosphate serves as cofactor.

The enzyme catalyses L-alanine = D-alanine. It functions in the pathway amino-acid biosynthesis; D-alanine biosynthesis; D-alanine from L-alanine: step 1/1. Its function is as follows. Catalyzes the interconversion of L-alanine and D-alanine. May also act on other amino acids. This chain is Alanine racemase (alr), found in Campylobacter concisus (strain 13826).